We begin with the raw amino-acid sequence, 124 residues long: Putative outer membrane protein TC_0858 (124 aa).

Positions M1 to A31 are cleaved as a signal peptide.

Its subcellular location is the cell outer membrane. In Chlamydia muridarum (strain MoPn / Nigg), this protein is Putative outer membrane protein TC_0858.